The chain runs to 178 residues: uncharacterized protein (178 aa).

This is an uncharacterized protein from Acanthamoeba polyphaga mimivirus (APMV).